The primary structure comprises 383 residues: MFALTFLNPNPRLPSPLFLAKSTPESALSRRSRAFSSSNSYPWRPNLRFNGFKLKSATVPENVEGGDLESGSLVKGLKLGGMFGVWYLLNIYYNIFNKQVLRVYPYPATVTAFQLGCGTLMIAIMWLLKLHPRPKFSPSQFTVIVQLAVAHTLGNLLTNVSLGRVNVSFTHTIKAMEPFFTVLLSVLLLGEWPSLWIVCSLLPIVAGVSLASFTEASFNWIGFCSAMASNVTNQSRNVLSKKFMVGKDALDNINLFSIITIISFILLVPLAILIDGFKVTPSHLQVATSQGLSVKEFCIMSLLAGVCLHSYQQVSYMILEMVSPVTHSVGNCVKRVVVITSSILFFKTPVSPLNSIGTATALAGVYLYSRAKRVQVKPNPKMS.

The N-terminal 55 residues, 1–55, are a transit peptide targeting the chloroplast; sequence MFALTFLNPNPRLPSPLFLAKSTPESALSRRSRAFSSSNSYPWRPNLRFNGFKLK. The next 8 membrane-spanning stretches (helical) occupy residues 76 to 96, 108 to 128, 143 to 163, 179 to 199, 210 to 232, 253 to 273, 299 to 319, and 350 to 369; these read GLKL…YNIF, ATVT…MWLL, VIVQ…VSLG, FFTV…WIVC, LASF…SNVT, INLF…LAIL, IMSL…YMIL, and VSPL…YLYS. Residues 93 to 212 form the EamA domain; that stretch reads YNIFNKQVLR…PIVAGVSLAS (120 aa).

The protein belongs to the TPT transporter family. PPT (TC 2.A.7.9) subfamily. As to expression, widely expressed in leaves throughout development. In flowers, expressed in sepals and pistils.

The protein localises to the plastid. The protein resides in the chloroplast membrane. In terms of biological role, phosphoenolpyruvate/phosphate translocator that transports phosphoenolpyruvate (PEP), 2-phosphoglycerate and 3-phosphoglycerate. The chain is Phosphoenolpyruvate/phosphate translocator 2, chloroplastic (PPT2) from Arabidopsis thaliana (Mouse-ear cress).